A 362-amino-acid chain; its full sequence is Phospho-N-acetylmuramoyl-pentapeptide-transferase (362 aa).

Transmembrane regions (helical) follow at residues 21–41, 75–95, 100–120, 136–156, 170–190, 201–221, 225–245, 247–267, 290–310, and 339–359; these read YITF…FLLG, TMGG…WADL, VWAV…DDFL, LVVQ…LMPG, LMIP…MGAS, GLAI…AYLV, IFSH…AVFC, ALIG…AVFM, IVLA…IVQV, and TVVI…LATL.

Belongs to the glycosyltransferase 4 family. MraY subfamily. It depends on Mg(2+) as a cofactor.

The protein resides in the cell inner membrane. The catalysed reaction is UDP-N-acetyl-alpha-D-muramoyl-L-alanyl-gamma-D-glutamyl-meso-2,6-diaminopimeloyl-D-alanyl-D-alanine + di-trans,octa-cis-undecaprenyl phosphate = di-trans,octa-cis-undecaprenyl diphospho-N-acetyl-alpha-D-muramoyl-L-alanyl-D-glutamyl-meso-2,6-diaminopimeloyl-D-alanyl-D-alanine + UMP. It functions in the pathway cell wall biogenesis; peptidoglycan biosynthesis. Its function is as follows. Catalyzes the initial step of the lipid cycle reactions in the biosynthesis of the cell wall peptidoglycan: transfers peptidoglycan precursor phospho-MurNAc-pentapeptide from UDP-MurNAc-pentapeptide onto the lipid carrier undecaprenyl phosphate, yielding undecaprenyl-pyrophosphoryl-MurNAc-pentapeptide, known as lipid I. In Acidiphilium cryptum (strain JF-5), this protein is Phospho-N-acetylmuramoyl-pentapeptide-transferase.